The chain runs to 163 residues: Crossover junction endodeoxyribonuclease RuvC (163 aa).

Catalysis depends on residues aspartate 4, glutamate 65, and aspartate 138. Mg(2+) is bound by residues aspartate 4, glutamate 65, and aspartate 138.

Belongs to the RuvC family. As to quaternary structure, homodimer which binds Holliday junction (HJ) DNA. The HJ becomes 2-fold symmetrical on binding to RuvC with unstacked arms; it has a different conformation from HJ DNA in complex with RuvA. In the full resolvosome a probable DNA-RuvA(4)-RuvB(12)-RuvC(2) complex forms which resolves the HJ. Mg(2+) serves as cofactor.

It localises to the cytoplasm. It carries out the reaction Endonucleolytic cleavage at a junction such as a reciprocal single-stranded crossover between two homologous DNA duplexes (Holliday junction).. Functionally, the RuvA-RuvB-RuvC complex processes Holliday junction (HJ) DNA during genetic recombination and DNA repair. Endonuclease that resolves HJ intermediates. Cleaves cruciform DNA by making single-stranded nicks across the HJ at symmetrical positions within the homologous arms, yielding a 5'-phosphate and a 3'-hydroxyl group; requires a central core of homology in the junction. The consensus cleavage sequence is 5'-(A/T)TT(C/G)-3'. Cleavage occurs on the 3'-side of the TT dinucleotide at the point of strand exchange. HJ branch migration catalyzed by RuvA-RuvB allows RuvC to scan DNA until it finds its consensus sequence, where it cleaves and resolves the cruciform DNA. This Corynebacterium diphtheriae (strain ATCC 700971 / NCTC 13129 / Biotype gravis) protein is Crossover junction endodeoxyribonuclease RuvC.